Here is a 284-residue protein sequence, read N- to C-terminus: Bifunctional protein FolD (284 aa).

NADP(+)-binding positions include 165-167 and S190; that span reads GRS.

It belongs to the tetrahydrofolate dehydrogenase/cyclohydrolase family. As to quaternary structure, homodimer.

It catalyses the reaction (6R)-5,10-methylene-5,6,7,8-tetrahydrofolate + NADP(+) = (6R)-5,10-methenyltetrahydrofolate + NADPH. The catalysed reaction is (6R)-5,10-methenyltetrahydrofolate + H2O = (6R)-10-formyltetrahydrofolate + H(+). It participates in one-carbon metabolism; tetrahydrofolate interconversion. Its function is as follows. Catalyzes the oxidation of 5,10-methylenetetrahydrofolate to 5,10-methenyltetrahydrofolate and then the hydrolysis of 5,10-methenyltetrahydrofolate to 10-formyltetrahydrofolate. The chain is Bifunctional protein FolD from Streptococcus pyogenes serotype M28 (strain MGAS6180).